The sequence spans 261 residues: MNPNCARCGKIVYPTEKVNCLDKFWHKACFHCETCKMTLNMKNYKGYEKKPYCNAHYPKQSFTMVADTPENLRLKQQSELQSQVRYKEEFEKNKGKGFSVVADTPELQRIKKTQDQISNIKYHEEFEKSRMGPSGGEGMEPERRDSQDGSSYRRPLEQQQPHHIPTSAPVYQQPQQQPVAQSYGGYKEPAAPVSIQRSAPGGGGKRYRAVYDYSAADEDEVSFQDGDTIVNVQQIDDGWMYGTVERTGDTGMLPANYVEAI.

Met-1 carries the post-translational modification N-acetylmethionine. The 52-residue stretch at 5–56 (CARCGKIVYPTEKVNCLDKFWHKACFHCETCKMTLNMKNYKGYEKKPYCNAH) folds into the LIM zinc-binding domain. Residue Lys-42 is modified to N6-acetyllysine. Nebulin repeat units follow at residues 61–95 (SFTM…KNKG) and 97–131 (GFSV…KSRM). Residue Thr-68 is modified to Phosphothreonine. At Lys-75 the chain carries N6-methyllysine. Ser-99 carries the post-translational modification Phosphoserine. Thr-104 bears the Phosphothreonine mark. Residues 111–186 (KKTQDQISNI…QPVAQSYGGY (76 aa)) are disordered. At Lys-112 the chain carries N6-succinyllysine. Phosphoserine is present on Ser-118. The span at 121 to 130 (KYHEEFEKSR) shows a compositional bias: basic and acidic residues. A phosphoserine mark is found at Ser-134 and Ser-146. Over residues 167–183 (SAPVYQQPQQQPVAQSY) the composition is skewed to low complexity. The 60-residue stretch at 202–261 (GGGKRYRAVYDYSAADEDEVSFQDGDTIVNVQQIDDGWMYGTVERTGDTGMLPANYVEAI) folds into the SH3 domain.

As to quaternary structure, interacts with F-actin. Interacts with ANKRD54. Interacts with KBTBD10.

Its subcellular location is the cytoplasm. The protein resides in the cell cortex. It localises to the cytoskeleton. In terms of biological role, plays an important role in the regulation of dynamic actin-based, cytoskeletal activities. Agonist-dependent changes in LASP1 phosphorylation may also serve to regulate actin-associated ion transport activities, not only in the parietal cell but also in certain other F-actin-rich secretory epithelial cell types. The sequence is that of LIM and SH3 domain protein 1 (LASP1) from Homo sapiens (Human).